Reading from the N-terminus, the 180-residue chain is UPF0149 protein XAC3406 (180 aa).

This sequence belongs to the UPF0149 family.

In Xanthomonas axonopodis pv. citri (strain 306), this protein is UPF0149 protein XAC3406.